Reading from the N-terminus, the 211-residue chain is NADH-quinone oxidoreductase subunit I (211 aa).

Residues 1–27 are disordered; that stretch reads MANTDRPALPHKRAVPPSRADSGPRRR. 4Fe-4S ferredoxin-type domains lie at 71 to 101 and 117 to 146; these read LNRYPDGLEKCIGCELCAWACPADAIYVEGA and RVYQINYLRCIGCGLCIEACPTRALTMTYD. Residues Cys-81, Cys-84, Cys-87, Cys-91, Cys-126, Cys-129, Cys-132, and Cys-136 each coordinate [4Fe-4S] cluster.

The protein belongs to the complex I 23 kDa subunit family. In terms of assembly, NDH-1 is composed of 14 different subunits. Subunits NuoA, H, J, K, L, M, N constitute the membrane sector of the complex. [4Fe-4S] cluster is required as a cofactor.

Its subcellular location is the cell membrane. The catalysed reaction is a quinone + NADH + 5 H(+)(in) = a quinol + NAD(+) + 4 H(+)(out). In terms of biological role, NDH-1 shuttles electrons from NADH, via FMN and iron-sulfur (Fe-S) centers, to quinones in the respiratory chain. The immediate electron acceptor for the enzyme in this species is believed to be menaquinone. Couples the redox reaction to proton translocation (for every two electrons transferred, four hydrogen ions are translocated across the cytoplasmic membrane), and thus conserves the redox energy in a proton gradient. The sequence is that of NADH-quinone oxidoreductase subunit I from Mycobacterium tuberculosis (strain ATCC 25177 / H37Ra).